Here is a 177-residue protein sequence, read N- to C-terminus: Large ribosomal subunit protein uL6 (177 aa).

It belongs to the universal ribosomal protein uL6 family. Part of the 50S ribosomal subunit.

In terms of biological role, this protein binds to the 23S rRNA, and is important in its secondary structure. It is located near the subunit interface in the base of the L7/L12 stalk, and near the tRNA binding site of the peptidyltransferase center. This chain is Large ribosomal subunit protein uL6, found in Leptothrix cholodnii (strain ATCC 51168 / LMG 8142 / SP-6) (Leptothrix discophora (strain SP-6)).